A 34-amino-acid chain; its full sequence is Potassium channel toxin alpha-KTx 6 hetlaxin (34 aa).

Cystine bridges form between C3/C24, C9/C29, C13/C31, and C19/C34. Position 34 is a cysteine amide (C34).

Post-translationally, contains 4 disulfide bonds. As to expression, expressed by the venom gland.

The protein localises to the secreted. Binds to voltage-gated potassium channels Kv1.3/KCNA3 (IC(50)=0.48 uM) and Kv1.1/KCNA1 (IC(50)=6.7 uM) and inhibits channel activity. The protein is Potassium channel toxin alpha-KTx 6 hetlaxin of Heterometrus laoticus (Thai giant scorpion).